Here is a 270-residue protein sequence, read N- to C-terminus: Homeobox protein pal-1 (270 aa).

3 disordered regions span residues 1–24 (MSVD…TTVP), 96–130 (VKPP…SGAA), and 175–201 (LGNN…TNNV). Composition is skewed to low complexity over residues 14–24 (SSSTPSPTTVP) and 101–130 (SNGS…SGAA). Residues 206–265 (ADKYRMVYSDYQRLELEKEFHTSPFITSDRKSQLSTMLSLTERQIKIWFQNRRAKDRRDK) constitute a DNA-binding region (homeobox).

It belongs to the Caudal homeobox family. In terms of assembly, interacts with tir-1 and let-756. As to expression, blastomeres. Embryo. Oocytes.

It localises to the nucleus. The protein resides in the chromosome. Its subcellular location is the centromere. It is found in the kinetochore. Functionally, transcriptional activator. Interacts with promoter regions for tbx-8.9, tbx-9, elt-1, hnd-1, scrt-1, and vab-7 genes. Binds the sequence ATTTATGAC. Binds to the enhancer region of the hlh-1 gene promoter during embryonic body wall muscle development. Activates the gene for mab-5 in embryo development. Necessary for vab-7 expression in C blastomeres in the posterior of embryos. Required for posterior V6 neuroectoblast cell fate specification during postembryonic neurogenesis (patterning) which generates the characteristic ray lineage during male tail development. Binds to ced-3 promoter and activated expression which is crucial for tail-spike cell death. Has a role in E cell specification in endoderm development and body wall muscle development. The chain is Homeobox protein pal-1 (pal-1) from Caenorhabditis elegans.